A 131-amino-acid polypeptide reads, in one-letter code: Large ribosomal subunit protein bL17 (131 aa).

Belongs to the bacterial ribosomal protein bL17 family. Part of the 50S ribosomal subunit. Contacts protein L32.

The polypeptide is Large ribosomal subunit protein bL17 (Herminiimonas arsenicoxydans).